The following is a 619-amino-acid chain: Phosphomethylpyrimidine synthase (619 aa).

Residues 93–104 (IKPEDNGLKGPD) show a composition bias toward basic and acidic residues. Residues 93-114 (IKPEDNGLKGPDRSGGVTPFPN) form a disordered region. Substrate is bound by residues Asn217, Met246, Tyr275, His311, 331 to 333 (SRG), 372 to 375 (DGLR), and Glu411. His415 is a binding site for Zn(2+). Position 438 (Tyr438) interacts with substrate. His479 contributes to the Zn(2+) binding site. 3 residues coordinate [4Fe-4S] cluster: Cys559, Cys562, and Cys567.

It belongs to the ThiC family. As to quaternary structure, homodimer. [4Fe-4S] cluster is required as a cofactor.

It carries out the reaction 5-amino-1-(5-phospho-beta-D-ribosyl)imidazole + S-adenosyl-L-methionine = 4-amino-2-methyl-5-(phosphooxymethyl)pyrimidine + CO + 5'-deoxyadenosine + formate + L-methionine + 3 H(+). It participates in cofactor biosynthesis; thiamine diphosphate biosynthesis. Catalyzes the synthesis of the hydroxymethylpyrimidine phosphate (HMP-P) moiety of thiamine from aminoimidazole ribotide (AIR) in a radical S-adenosyl-L-methionine (SAM)-dependent reaction. In Rhizorhabdus wittichii (strain DSM 6014 / CCUG 31198 / JCM 15750 / NBRC 105917 / EY 4224 / RW1) (Sphingomonas wittichii), this protein is Phosphomethylpyrimidine synthase.